The following is a 23-amino-acid chain: Melittin-related peptide AK-23-1 (23 aa).

Lysine 23 is modified (lysine amide).

In terms of tissue distribution, expressed by the skin glands.

The protein localises to the secreted. The protein is Melittin-related peptide AK-23-1 of Rana arvalis (Moor frog).